The chain runs to 229 residues: Leucyl/phenylalanyl-tRNA--protein transferase (229 aa).

It belongs to the L/F-transferase family.

Its subcellular location is the cytoplasm. It carries out the reaction N-terminal L-lysyl-[protein] + L-leucyl-tRNA(Leu) = N-terminal L-leucyl-L-lysyl-[protein] + tRNA(Leu) + H(+). The enzyme catalyses N-terminal L-arginyl-[protein] + L-leucyl-tRNA(Leu) = N-terminal L-leucyl-L-arginyl-[protein] + tRNA(Leu) + H(+). The catalysed reaction is L-phenylalanyl-tRNA(Phe) + an N-terminal L-alpha-aminoacyl-[protein] = an N-terminal L-phenylalanyl-L-alpha-aminoacyl-[protein] + tRNA(Phe). Functionally, functions in the N-end rule pathway of protein degradation where it conjugates Leu, Phe and, less efficiently, Met from aminoacyl-tRNAs to the N-termini of proteins containing an N-terminal arginine or lysine. The protein is Leucyl/phenylalanyl-tRNA--protein transferase of Pseudomonas syringae pv. tomato (strain ATCC BAA-871 / DC3000).